The sequence spans 577 residues: Arginine--tRNA ligase (577 aa).

The short motif at 122–132 (PNVAKEMHVGH) is the 'HIGH' region element.

It belongs to the class-I aminoacyl-tRNA synthetase family. As to quaternary structure, monomer.

Its subcellular location is the cytoplasm. It carries out the reaction tRNA(Arg) + L-arginine + ATP = L-arginyl-tRNA(Arg) + AMP + diphosphate. This is Arginine--tRNA ligase from Escherichia coli O127:H6 (strain E2348/69 / EPEC).